The sequence spans 361 residues: 4-hydroxytryptamine kinase (361 aa).

ATP is bound by residues Asn-37, Lys-57, and 118-120 (QDV). Asp-224 is an active-site residue. 248–250 (DWE) lines the ATP pocket.

This sequence belongs to the methylthioribose kinase family. As to quaternary structure, monomer. Mg(2+) is required as a cofactor.

The catalysed reaction is 4-hydroxytryptamine + ATP = norbaeocystin + ADP + H(+). The enzyme catalyses psilocin + ATP = psilocybin + ADP + H(+). It carries out the reaction 4-hydroxy-N,N,N-trimethyltryptamine + ATP = aeruginascin + ADP + H(+). It participates in secondary metabolite biosynthesis. 4-hydroxytryptamine kinase; part of the gene cluster that mediates the biosynthesis of psilocybin, a psychotropic tryptamine-derived natural product. The first step in the pathway is the decarboxylation of L-tryptophan to tryptamine by the decarboxylase psiD. PsiD does not decarboxylate phenylalanine, tyrosine, or 5-hydroxy- L -tryptophan (5-HTP). 4-hydroxy-L-tryptophan is accepted as substrate by psiD as well. The cytochrome P450 monooxygenase psiH then converts tryptamine to 4-hydroxytryptamine. The kinase psiK catalyzes the 4-O-phosphorylation step by converting 4-hydroxytryptamine into norbaeocystin. The methyltransferase psiM then catalyzes iterative methyl transfer to the amino group of norbaeocystin to yield psilocybin via a monomethylated intermediate, baeocystin. 4-hydroxy-6-methyl-l-tryptophancan also be converted the decarboxylase PsiD, kinase PsiK, and methyltransferase PsiM into respectively 6-methyl-norbaeocystin, 6-methylbaeocystin, and 6-methylpsilocybin. PsiK kinase can also turn psilocin into psilocybin. This activity may represent a protective mechanism to rephosphorylate the unstable psilocin to the stable psilocybin in case of intracellular ester cleavage. Moreover, psiK is able to O-phosphorylate the quaternary amine 4-hydroxy-N,N,N-trimethyltryptamine (4-OH-TMT) to yield aeruginascin, another bioactive compound found in Psilocybe species. This Psilocybe cyanescens protein is 4-hydroxytryptamine kinase.